A 372-amino-acid polypeptide reads, in one-letter code: Chaperone protein DnaJ (372 aa).

One can recognise a J domain in the interval 5–69 (EFYDRLGVSK…QKRAAYDQYG (65 aa)). A CR-type zinc finger spans residues 129–211 (GTEKEVKYHR…CHGTGHEKQA (83 aa)). 8 residues coordinate Zn(2+): Cys-142, Cys-145, Cys-159, Cys-162, Cys-185, Cys-188, Cys-199, and Cys-202. 4 CXXCXGXG motif repeats span residues 142 to 149 (CRTCNGSG), 159 to 166 (CGRCHGAG), 185 to 192 (CDVCHGRG), and 199 to 206 (CTTCHGTG).

It belongs to the DnaJ family. In terms of assembly, homodimer. Requires Zn(2+) as cofactor.

The protein resides in the cytoplasm. In terms of biological role, participates actively in the response to hyperosmotic and heat shock by preventing the aggregation of stress-denatured proteins and by disaggregating proteins, also in an autonomous, DnaK-independent fashion. Unfolded proteins bind initially to DnaJ; upon interaction with the DnaJ-bound protein, DnaK hydrolyzes its bound ATP, resulting in the formation of a stable complex. GrpE releases ADP from DnaK; ATP binding to DnaK triggers the release of the substrate protein, thus completing the reaction cycle. Several rounds of ATP-dependent interactions between DnaJ, DnaK and GrpE are required for fully efficient folding. Also involved, together with DnaK and GrpE, in the DNA replication of plasmids through activation of initiation proteins. The chain is Chaperone protein DnaJ from Streptococcus pneumoniae (strain ATCC BAA-255 / R6).